A 239-amino-acid polypeptide reads, in one-letter code: Ribonuclease PH (239 aa).

Residues R86 and 124–126 (GTR) contribute to the phosphate site.

The protein belongs to the RNase PH family. In terms of assembly, homohexameric ring arranged as a trimer of dimers.

It catalyses the reaction tRNA(n+1) + phosphate = tRNA(n) + a ribonucleoside 5'-diphosphate. Functionally, phosphorolytic 3'-5' exoribonuclease that plays an important role in tRNA 3'-end maturation. Removes nucleotide residues following the 3'-CCA terminus of tRNAs; can also add nucleotides to the ends of RNA molecules by using nucleoside diphosphates as substrates, but this may not be physiologically important. Probably plays a role in initiation of 16S rRNA degradation (leading to ribosome degradation) during starvation. This Cupriavidus necator (strain ATCC 17699 / DSM 428 / KCTC 22496 / NCIMB 10442 / H16 / Stanier 337) (Ralstonia eutropha) protein is Ribonuclease PH.